Consider the following 241-residue polypeptide: MPILVVNVDHVATLRQQRLGIEPDPVTAAHMAELAGARGIIVHLREDRRHIQDRDVSLLRQTLKTRLHLEMAATEEMQGIALAEKPHMVCLVPEKREELTTEGGLVVAGRVDFLQAYVKPFHEIGIATSLFIEADPDQIRAAARVGVTHVELHTGHFADAPDAAERKRQRDAIVAGIGLARTLGLKVNLGHGLNYDNIFDFEAVPGICEFSIGHSIVSRAVLTGFGPAVRDMVDIINRFPG.

3-amino-2-oxopropyl phosphate is bound at residue Asn-7. Asp-9–His-10 provides a ligand contact to 1-deoxy-D-xylulose 5-phosphate. Arg-18 provides a ligand contact to 3-amino-2-oxopropyl phosphate. His-43 serves as the catalytic Proton acceptor. 1-deoxy-D-xylulose 5-phosphate-binding residues include Arg-45 and His-50. The Proton acceptor role is filled by Glu-70. Thr-100 is a 1-deoxy-D-xylulose 5-phosphate binding site. Catalysis depends on His-191, which acts as the Proton donor. 3-amino-2-oxopropyl phosphate contacts are provided by residues Gly-192 and Gly-213–His-214.

The protein belongs to the PNP synthase family. In terms of assembly, homooctamer; tetramer of dimers.

The protein resides in the cytoplasm. The catalysed reaction is 3-amino-2-oxopropyl phosphate + 1-deoxy-D-xylulose 5-phosphate = pyridoxine 5'-phosphate + phosphate + 2 H2O + H(+). It functions in the pathway cofactor biosynthesis; pyridoxine 5'-phosphate biosynthesis; pyridoxine 5'-phosphate from D-erythrose 4-phosphate: step 5/5. In terms of biological role, catalyzes the complicated ring closure reaction between the two acyclic compounds 1-deoxy-D-xylulose-5-phosphate (DXP) and 3-amino-2-oxopropyl phosphate (1-amino-acetone-3-phosphate or AAP) to form pyridoxine 5'-phosphate (PNP) and inorganic phosphate. The polypeptide is Pyridoxine 5'-phosphate synthase (Nitratidesulfovibrio vulgaris (strain ATCC 29579 / DSM 644 / CCUG 34227 / NCIMB 8303 / VKM B-1760 / Hildenborough) (Desulfovibrio vulgaris)).